The chain runs to 356 residues: C-X-C chemokine receptor type 2 (356 aa).

The Extracellular segment spans residues Met1–Lys46. Asn8 and Asn20 each carry an N-linked (GlcNAc...) asparagine glycan. The helical transmembrane segment at Tyr47–Tyr73 threads the bilayer. At Ser74–Asp82 the chain is on the cytoplasmic side. A helical membrane pass occupies residues Val83 to Ala103. At Val104 to Lys118 the chain is on the extracellular side. Residues Cys117 and Cys194 are joined by a disulfide bond. Residues Ile119–Met140 traverse the membrane as a helical segment. Over Asp141 to Lys161 the chain is Cytoplasmic. Residues Phe162–Phe181 traverse the membrane as a helical segment. Residues Arg182–Arg206 lie on the Extracellular side of the membrane. A helical membrane pass occupies residues Ile207–Tyr229. Topologically, residues Gly230–Arg249 are cytoplasmic. A helical transmembrane segment spans residues Val250–Ala269. Topologically, residues Asp270–Arg290 are extracellular. The chain crosses the membrane as a helical span at residues Ala291 to Ala311. Residues Phe312 to Phe356 lie on the Cytoplasmic side of the membrane.

It belongs to the G-protein coupled receptor 1 family. As to quaternary structure, interacts with IL8. Interacts with GNAI2. In terms of processing, phosphorylated upon ligand binding; which is required for desensitization.

It is found in the cell membrane. Receptor for interleukin-8 which is a powerful neutrophil chemotactic factor. Binding of IL-8 to the receptor causes activation of neutrophils. This response is mediated via a G-protein that activates a phosphatidylinositol-calcium second messenger system. Binds to IL-8 with high affinity. Also binds with high affinity to CXCL3, GRO/MGSA and NAP-2. The polypeptide is C-X-C chemokine receptor type 2 (CXCR2) (Canis lupus familiaris (Dog)).